An 89-amino-acid chain; its full sequence is Large ribosomal subunit protein eL34 (89 aa).

Residues 1–22 (MPAPRYKSGSSKKVYRKAPGNS) are disordered.

Belongs to the eukaryotic ribosomal protein eL34 family.

This is Large ribosomal subunit protein eL34 from Methanococcus maripaludis (strain DSM 14266 / JCM 13030 / NBRC 101832 / S2 / LL).